A 538-amino-acid chain; its full sequence is CTP synthase (538 aa).

The interval 1–267 (MDRAKFIFVT…LTPIARRFNL (267 aa)) is amidoligase domain. Position 15 (Ser15) interacts with CTP. Ser15 contacts UTP. Residues 16–21 (SLGKGI) and Asp73 each bind ATP. 2 residues coordinate Mg(2+): Asp73 and Glu141. Residues 148–150 (DME), 188–193 (KTKPTQ), and Lys224 contribute to the CTP site. Residues 188–193 (KTKPTQ) and Lys224 contribute to the UTP site. The Glutamine amidotransferase type-1 domain maps to 292-538 (KIGFVGKYLS…DFIKSALSKS (247 aa)). Gly351 is an L-glutamine binding site. Cys378 acts as the Nucleophile; for glutamine hydrolysis in catalysis. Residues 379–382 (LGMQ), Glu402, and Arg469 each bind L-glutamine. Residues His513 and Glu515 contribute to the active site.

The protein belongs to the CTP synthase family. As to quaternary structure, homotetramer.

The catalysed reaction is UTP + L-glutamine + ATP + H2O = CTP + L-glutamate + ADP + phosphate + 2 H(+). It carries out the reaction L-glutamine + H2O = L-glutamate + NH4(+). It catalyses the reaction UTP + NH4(+) + ATP = CTP + ADP + phosphate + 2 H(+). It participates in pyrimidine metabolism; CTP biosynthesis via de novo pathway; CTP from UDP: step 2/2. With respect to regulation, allosterically activated by GTP, when glutamine is the substrate; GTP has no effect on the reaction when ammonia is the substrate. The allosteric effector GTP functions by stabilizing the protein conformation that binds the tetrahedral intermediate(s) formed during glutamine hydrolysis. Inhibited by the product CTP, via allosteric rather than competitive inhibition. Functionally, catalyzes the ATP-dependent amination of UTP to CTP with either L-glutamine or ammonia as the source of nitrogen. Regulates intracellular CTP levels through interactions with the four ribonucleotide triphosphates. The chain is CTP synthase from Helicobacter pylori (strain ATCC 700392 / 26695) (Campylobacter pylori).